The primary structure comprises 368 residues: 4-hydroxy-3-methylbut-2-en-1-yl diphosphate synthase (flavodoxin) (368 aa).

Residues C271, C274, C306, and E313 each coordinate [4Fe-4S] cluster.

Belongs to the IspG family. [4Fe-4S] cluster serves as cofactor.

The enzyme catalyses (2E)-4-hydroxy-3-methylbut-2-enyl diphosphate + oxidized [flavodoxin] + H2O + 2 H(+) = 2-C-methyl-D-erythritol 2,4-cyclic diphosphate + reduced [flavodoxin]. Its pathway is isoprenoid biosynthesis; isopentenyl diphosphate biosynthesis via DXP pathway; isopentenyl diphosphate from 1-deoxy-D-xylulose 5-phosphate: step 5/6. In terms of biological role, converts 2C-methyl-D-erythritol 2,4-cyclodiphosphate (ME-2,4cPP) into 1-hydroxy-2-methyl-2-(E)-butenyl 4-diphosphate. The protein is 4-hydroxy-3-methylbut-2-en-1-yl diphosphate synthase (flavodoxin) of Haemophilus influenzae (strain PittGG).